A 63-amino-acid chain; its full sequence is High-potential iron-sulfur protein (63 aa).

[4Fe-4S] cluster-binding residues include Cys23, Cys26, Cys41, and Cys56.

The protein belongs to the high-potential iron-sulfur protein (HiPIP) family. In terms of assembly, homodimer.

Specific class of high-redox-potential 4Fe-4S ferredoxins. Functions in anaerobic electron transport in most purple and in some other photosynthetic bacteria and in at least one genus (Paracoccus) of halophilic, denitrifying bacteria. The sequence is that of High-potential iron-sulfur protein (hip) from Rhodocyclus tenuis (Rhodospirillum tenue).